The chain runs to 391 residues: Large envelope protein (391 aa).

At Met1 the chain carries N-acetylmethionine. A lipid anchor (N-myristoyl glycine; by host) is attached at Gly2. The segment at 2 to 108 (GLNQSTFNPL…PPLRDTHPQA (107 aa)) is pre-S1. Positions 2-163 (GLNQSTFNPL…FSTTGVPVST (162 aa)) are pre-S. The Virion surface; in external conformation segment spans residues 2 to 170 (GLNQSTFNPL…VSTMDITSSG (169 aa)). The Intravirion; in internal conformation segment spans residues 2 to 242 (GLNQSTFNPL…PGYRWMCLRR (241 aa)). Positions 73–107 (LSVTVPDTPPPPSTNRDKGRKPTPATPPLRDTHPQ) are disordered. Positions 109–163 (MTWNTSSFQSYLQNPKVRGLYFPAGGSTSSIVNPVPTTASTTSSSFSTTGVPVST) are pre-S2. Residues 171–191 (FLGPLLALQAVFFLLTKILTM) traverse the membrane as a helical segment. The Intravirion; in external conformation segment spans residues 192-242 (PQSLDSLWTSLNFLGGTPACPGLNSQSPTSSHSPTCCPPTCPGYRWMCLRR). The helical transmembrane segment at 243–263 (SIIFLFILLLCLIFLLVLLDY) threads the bilayer. Over 264–339 (QGMLPVCPLL…WALARFSWLN (76 aa)) the chain is Virion surface. The N-linked (GlcNAc...) asparagine; by host glycan is linked to Asn311. A helical transmembrane segment spans residues 340 to 360 (SLLPFVQWFAGLSPTVWLLVI). Residues 361 to 366 (WMMWFW) lie on the Intravirion side of the membrane. A helical transmembrane segment spans residues 367–389 (GPSLFSILSPFLPLLPLFFWLWA). Topologically, residues 390–391 (YI) are virion surface.

It belongs to the orthohepadnavirus major surface antigen family. In terms of assembly, in its internal form (Li-HBsAg), interacts with the capsid protein and with the isoform S. Interacts with host chaperone CANX. As to quaternary structure, associates with host chaperone CANX through its pre-S2 N glycan; this association may be essential for isoform M proper secretion. Interacts with isoform L. Interacts with the antigens of satellite virus HDV (HDVAgs); this interaction is required for encapsidation of HDV genomic RNA. In terms of processing, isoform M is N-terminally acetylated by host at a ratio of 90%, and N-glycosylated by host at the pre-S2 region. Myristoylated.

The protein localises to the virion membrane. Its function is as follows. The large envelope protein exists in two topological conformations, one which is termed 'external' or Le-HBsAg and the other 'internal' or Li-HBsAg. In its external conformation the protein attaches the virus to cell receptors and thereby initiating infection. This interaction determines the species specificity and liver tropism. This attachment induces virion internalization predominantly through caveolin-mediated endocytosis. The large envelope protein also assures fusion between virion membrane and endosomal membrane. In its internal conformation the protein plays a role in virion morphogenesis and mediates the contact with the nucleocapsid like a matrix protein. The middle envelope protein plays an important role in the budding of the virion. It is involved in the induction of budding in a nucleocapsid independent way. In this process the majority of envelope proteins bud to form subviral lipoprotein particles of 22 nm of diameter that do not contain a nucleocapsid. This is Large envelope protein from Woolly monkey hepatitis B virus (isolate Louisville) (WMHBV).